We begin with the raw amino-acid sequence, 187 residues long: MSVLKDRYENEIKQSLLKDMNLSSTMAIPKIEKIIINMGVTQAVTDKKYVDSAVEELSQIAGQRAVVTRAKKSIANFKLRQGMPIGCRVTLRGERMYDFLERLIFIALPRVRDFQGIPRRGFDGNGNYNLGIKEHTIFPEISFDKTDAVKGLNITIVTTADNDDMARTLLERVGLPFRAAPKSQENK.

The protein belongs to the universal ribosomal protein uL5 family. Part of the 50S ribosomal subunit; part of the 5S rRNA/L5/L18/L25 subcomplex. Contacts the 5S rRNA and the P site tRNA. Forms a bridge to the 30S subunit in the 70S ribosome.

In terms of biological role, this is one of the proteins that bind and probably mediate the attachment of the 5S RNA into the large ribosomal subunit, where it forms part of the central protuberance. In the 70S ribosome it contacts protein S13 of the 30S subunit (bridge B1b), connecting the 2 subunits; this bridge is implicated in subunit movement. Contacts the P site tRNA; the 5S rRNA and some of its associated proteins might help stabilize positioning of ribosome-bound tRNAs. This chain is Large ribosomal subunit protein uL5, found in Brachyspira hyodysenteriae (strain ATCC 49526 / WA1).